An 827-amino-acid polypeptide reads, in one-letter code: Villin-1 (827 aa).

The necessary for homodimerization stretch occupies residues 1–126 (MTKLNAQVKG…IRKGGVASGM (126 aa)). The interval 1–734 (MTKLNAQVKG…YDDLKAELGN (734 aa)) is core. A Gelsolin-like 1 repeat occupies 27–76 (MQMVPVPSSTFGSFFDGDCYVVLAIHKTSSTLSYDIHYWIGQDSSQDEQG). 2 LPA/PIP2-binding site regions span residues 112-119 (KQGLVIRK) and 138-146 (RLLHVKGKR). Gelsolin-like repeat units follow at residues 148–188 (VLAG…MERL) and 265–309 (LVVR…QERS). The residue at position 366 (Ser366) is a Phosphoserine. Gelsolin-like repeat units follow at residues 407 to 457 (DLEL…DEIA), 528 to 568 (TKAF…DERE), and 631 to 672 (FLAT…EEKK). Residues Ser735 and Ser776 each carry the phosphoserine modification. The segment at 735–827 (SGDWSQIADE…QNIKKEKGLF (93 aa)) is headpiece. The HP domain maps to 761–827 (SGPLPTFPLE…QNIKKEKGLF (67 aa)). The segment at 816 to 824 (KQQNIKKEK) is LPA/PIP2-binding site 3.

It belongs to the villin/gelsolin family. As to quaternary structure, monomer. Homodimer; homodimerization is necessary for actin-bundling. Associates with F-actin; phosphorylation at tyrosine residues decreases the association with F-actin. Interacts (phosphorylated at C-terminus tyrosine phosphorylation sites) with PLCG1 (via the SH2 domains). Interacts (phosphorylated form) with PLCG1; the interaction is enhanced by hepatocyte growth factor (HGF). Phosphorylated on tyrosine residues by SRC. The unphosphorylated form increases the initial rate of actin-nucleating activity, whereas the tyrosine phosphorylated form inhibits actin-nucleating activity, enhances actin-bundling activity and enhances actin-severing activity by reducing high Ca(2+) requirements. The tyrosine phosphorylated form does not regulate actin-capping activity. Tyrosine phosphorylation is essential for cell migration: tyrosine phosphorylation sites in the N-terminus half regulate actin reorganization and cell morphology, whereas tyrosine phosphorylation sites in the C-terminus half regulate cell migration via interaction with PLCG1. Tyrosine phosphorylation is induced by epidermal growth factor (EGF) and stimulates cell migration. As to expression, expressed in small intestin, colon, kidney and enterocytes (at protein level).

The protein localises to the cytoplasm. It localises to the cytoskeleton. It is found in the cell projection. Its subcellular location is the microvillus. The protein resides in the lamellipodium. The protein localises to the ruffle. It localises to the filopodium tip. It is found in the filopodium. Functionally, epithelial cell-specific Ca(2+)-regulated actin-modifying protein that modulates the reorganization of microvillar actin filaments. Plays a role in the actin nucleation, actin filament bundle assembly, actin filament capping and severing. Binds phosphatidylinositol 4,5-bisphosphate (PIP2) and lysophosphatidic acid (LPA); binds LPA with higher affinity than PIP2. Binding to LPA increases its phosphorylation by SRC and inhibits all actin-modifying activities. Binding to PIP2 inhibits actin-capping and -severing activities but enhances actin-bundling activity. Regulates the intestinal epithelial cell morphology, cell invasion, cell migration and apoptosis. Protects against apoptosis induced by dextran sodium sulfate (DSS) in the gastrointestinal epithelium. Appears to regulate cell death by maintaining mitochondrial integrity. Enhances hepatocyte growth factor (HGF)-induced epithelial cell motility, chemotaxis and wound repair. Upon S.flexneri cell infection, its actin-severing activity enhances actin-based motility of the bacteria and plays a role during the dissemination. The chain is Villin-1 (Vil1) from Mus musculus (Mouse).